The sequence spans 284 residues: MKKIGIFAKVHEEPLEMADQLQKWLVNRDIEVVRRESSPPVLDVTQSNPGHAPADLSCVIVLGGDGTFLSAARWIGNQEIPILGVKFGAVGFLSETRKQDLYPVLESVLKKDFTTQTRTRLLATVREDEKIITTQTVLNDVVINNGTLARLANVNTYVDEEYLTTFRADGLIVATPTGSTAYSLAAGGPILEPQVAAIVLTPICPFTLTNRPLIVTDTSTICMTLAATAMDVTLTFDGQAGLKLNEHHTITIQKAPVPTIMIKVPGQSYFDVLKTKLRWSGGKV.

The active-site Proton acceptor is D65. Residues 65-66 (DG), 139-140 (ND), R150, R167, D169, and Q239 contribute to the NAD(+) site.

Belongs to the NAD kinase family. It depends on a divalent metal cation as a cofactor.

The protein localises to the cytoplasm. It carries out the reaction NAD(+) + ATP = ADP + NADP(+) + H(+). Its function is as follows. Involved in the regulation of the intracellular balance of NAD and NADP, and is a key enzyme in the biosynthesis of NADP. Catalyzes specifically the phosphorylation on 2'-hydroxyl of the adenosine moiety of NAD to yield NADP. The polypeptide is NAD kinase (Desulfatibacillum aliphaticivorans).